Reading from the N-terminus, the 25-residue chain is Metallothionein (25 aa).

Residues Cys3, Cys5, Cys11, Cys13, Cys18, Cys20, and Cys23 each coordinate Cu(+).

This sequence belongs to the metallothionein superfamily. Type 8 family.

In terms of biological role, the metallothioneins are involved in the cellular sequestration of toxic metal ions. Binds six copper (cuprous) ions. This Agaricus bisporus (White button mushroom) protein is Metallothionein.